The following is a 156-amino-acid chain: ATP synthase subunit b (156 aa).

The chain crosses the membrane as a helical span at residues 7–27 (LFVQAIVFAILVWFTMKFVWP).

The protein belongs to the ATPase B chain family. F-type ATPases have 2 components, F(1) - the catalytic core - and F(0) - the membrane proton channel. F(1) has five subunits: alpha(3), beta(3), gamma(1), delta(1), epsilon(1). F(0) has three main subunits: a(1), b(2) and c(10-14). The alpha and beta chains form an alternating ring which encloses part of the gamma chain. F(1) is attached to F(0) by a central stalk formed by the gamma and epsilon chains, while a peripheral stalk is formed by the delta and b chains.

It localises to the cell inner membrane. In terms of biological role, f(1)F(0) ATP synthase produces ATP from ADP in the presence of a proton or sodium gradient. F-type ATPases consist of two structural domains, F(1) containing the extramembraneous catalytic core and F(0) containing the membrane proton channel, linked together by a central stalk and a peripheral stalk. During catalysis, ATP synthesis in the catalytic domain of F(1) is coupled via a rotary mechanism of the central stalk subunits to proton translocation. Functionally, component of the F(0) channel, it forms part of the peripheral stalk, linking F(1) to F(0). The sequence is that of ATP synthase subunit b from Polaromonas sp. (strain JS666 / ATCC BAA-500).